The following is a 408-amino-acid chain: Na(+)-translocating NADH-quinone reductase subunit F (408 aa).

The helical transmembrane segment at 4 to 24 (IYLGVGMFIAIVLALVLIIMF) threads the bilayer. In terms of domain architecture, 2Fe-2S ferredoxin-type spans 33-127 (GEVTISINGD…DMDIELPEEI (95 aa)). C70, C76, C79, and C111 together coordinate [2Fe-2S] cluster. The 141-residue stretch at 130–270 (IKKWDCEVIS…SGPFGEFFAK (141 aa)) folds into the FAD-binding FR-type domain.

Belongs to the NqrF family. Composed of six subunits; NqrA, NqrB, NqrC, NqrD, NqrE and NqrF. It depends on [2Fe-2S] cluster as a cofactor. The cofactor is FAD.

It is found in the cell inner membrane. It carries out the reaction a ubiquinone + n Na(+)(in) + NADH + H(+) = a ubiquinol + n Na(+)(out) + NAD(+). In terms of biological role, NQR complex catalyzes the reduction of ubiquinone-1 to ubiquinol by two successive reactions, coupled with the transport of Na(+) ions from the cytoplasm to the periplasm. The first step is catalyzed by NqrF, which accepts electrons from NADH and reduces ubiquinone-1 to ubisemiquinone by a one-electron transfer pathway. The protein is Na(+)-translocating NADH-quinone reductase subunit F of Pseudoalteromonas atlantica (strain T6c / ATCC BAA-1087).